The following is a 201-amino-acid chain: Ras-related protein Rab-9B (201 aa).

GTP is bound by residues V18, G19, K20, S21, S22, D33, S34, A36, H38, and T39. S21 contributes to the Mg(2+) binding site. The Switch 1 signature appears at 31–42 (KFDSQAFHTIGV). S34 carries the post-translational modification Phosphoserine. The Mg(2+) site is built by T39 and D62. The Switch 2 signature appears at 64-78 (AGQERFKSLRTPFYR). GTP-binding residues include G65, N124, K125, A155, and K156. S-geranylgeranyl cysteine attachment occurs at residues C200 and C201.

This sequence belongs to the small GTPase superfamily. Rab family. In terms of assembly, interacts (GTP-bound form) with SGSM1; the GDP-bound form has much lower affinity for SGSM1. The GTP-bound form but not the GDP-bound form interacts with HPS4 and the BLOC-3 complex (heterodimer of HPS1 and HPS4) but does not interact with HPS1 alone. Interacts (GTP-bound form) with NDE1. It depends on Mg(2+) as a cofactor. In terms of tissue distribution, ubiquitous.

It localises to the cell membrane. It is found in the cytoplasmic vesicle. The protein resides in the phagosome. Its subcellular location is the phagosome membrane. It catalyses the reaction GTP + H2O = GDP + phosphate + H(+). With respect to regulation, regulated by guanine nucleotide exchange factors (GEFs) which promote the exchange of bound GDP for free GTP. Regulated by GTPase activating proteins (GAPs) which increase the GTP hydrolysis activity. Inhibited by GDP dissociation inhibitors (GDIs). Functionally, the small GTPases Rab are key regulators of intracellular membrane trafficking, from the formation of transport vesicles to their fusion with membranes. Rabs cycle between an inactive GDP-bound form and an active GTP-bound form that is able to recruit to membranes different sets of downstream effectors directly responsible for vesicle formation, movement, tethering and fusion. RAB9B is involved in the transport of proteins between the endosomes and the trans Golgi network. May use NDE1/NDEL1 as an effector to interact with the dynein motor complex in order to control retrograde trafficking of RAB9-associated late endosomes to the TGN. The chain is Ras-related protein Rab-9B from Homo sapiens (Human).